Consider the following 438-residue polypeptide: Polycomb protein eed-B (438 aa).

Positions 1-70 (MSEASGRAAG…GRKGWGKGKW (70 aa)) are disordered. A compositionally biased stretch (polar residues) spans 40 to 57 (SIESGTNTERPDTPTNAA). WD repeat units lie at residues 88-131 (DHNQ…DIRL), 139-182 (DADE…CIKH), 185-225 (GHGN…LVAI), 231-270 (GHRD…MKTA), 301-338 (IHRN…DDIE), 356-396 (SQCD…PHKA), and 405-438 (KCAS…DRLR).

This sequence belongs to the WD repeat ESC family. As to quaternary structure, component of the prc2/eed-ezh2 complex. Can interact with ezh2, hdac1 and taf9. Interacts with yy1.

It localises to the nucleus. Its function is as follows. Polycomb group (PcG) protein. Component of the prc2/eed-ezh2 complex, which methylates 'Lys-9' and 'Lys-27' of histone H3, leading to transcriptional repression of the affected target gene. May play a role in neural induction. The polypeptide is Polycomb protein eed-B (eed-b) (Xenopus laevis (African clawed frog)).